The primary structure comprises 452 residues: Lysine-rich nucleolar protein 1 (452 aa).

3 disordered regions span residues 1-28, 55-161, and 184-305; these read MITK…VKEP, VIQE…AFSG, and REQA…PDTD. Lys7 participates in a covalent cross-link: Glycyl lysine isopeptide (Lys-Gly) (interchain with G-Cter in SUMO2). The segment covering 65–75 has biased composition (basic residues); that stretch reads LVKKKKKKKGH. The span at 78–98 shows a compositional bias: basic and acidic residues; it reads ICEEHLEPEITLRAGRTERSH. Residue Ser112 is modified to Phosphoserine. Lys126 participates in a covalent cross-link: Glycyl lysine isopeptide (Lys-Gly) (interchain with G-Cter in SUMO2). Positions 127 to 139 are enriched in basic and acidic residues; sequence TSPDPRQDEEVTR. Ser128 carries the post-translational modification Phosphoserine. Composition is skewed to basic residues over residues 140 to 151 and 258 to 267; these read VGKKLKKHKKEK and SVKKKVKSKK. Ser258 is modified (phosphoserine). Lys280 is covalently cross-linked (Glycyl lysine isopeptide (Lys-Gly) (interchain with G-Cter in SUMO2)). Positions 293–305 are enriched in acidic residues; sequence VAEEPWEEEPDTD. The tract at residues 300–452 is interaction with ZNF106; the sequence is EEPDTDLEVV…NASKSIKFED (153 aa). A Phosphothreonine modification is found at Thr304. Residues Lys313, Lys347, Lys367, Lys369, and Lys401 each participate in a glycyl lysine isopeptide (Lys-Gly) (interchain with G-Cter in SUMO2) cross-link. Residue Arg424 is modified to Omega-N-methylarginine. Residue Lys436 forms a Glycyl lysine isopeptide (Lys-Gly) (interchain with G-Cter in SUMO2) linkage.

Interacts with ZNF106.

Its subcellular location is the nucleus. It localises to the nucleolus. The sequence is that of Lysine-rich nucleolar protein 1 (KNOP1) from Bos taurus (Bovine).